Consider the following 435-residue polypeptide: Acetyltransferase atnC (435 aa).

The next 3 helical transmembrane spans lie at 10 to 30, 40 to 60, and 68 to 88; these read AFANVALLFAVQILIPAFLII, YFGIPCIAFPAYLIFQLAPTL, and SFLACEGILVVAHCVNLLLIL. N203 is a glycosylation site (N-linked (GlcNAc...) asparagine). Transmembrane regions (helical) follow at residues 306-326, 333-353, and 370-390; these read FLVFLLSGILHAVSANIMGLS, IPYFSSFALGMMLEDGVQAFY, and VVGFIWVVFWMSLTSPWYMFP. A glycan (N-linked (GlcNAc...) asparagine) is linked at N406. The chain crosses the membrane as a helical span at residues 407-427; it reads LTEVIGMPMMWGLLGTFGMLV.

It belongs to the wax synthase family.

It localises to the membrane. It participates in secondary metabolite biosynthesis; terpenoid biosynthesis. Acetyltransferase; part of the gene cluster that mediates the biosynthesis of the meroterpenoids arthripenoids. The pathway begins with the HR-PKS atnH that catalyzes two chain-extension steps to form a reduced triketide, which then primes the SAT domain in the NR-PKS atnG to initiate three more cycles of extension to give a linear hexaketide corresponding to the polyketide part of arthripenoids. The FAD-dependent monooxygenase atnJ then performs an oxidative decarboxylation at C11 of the atnH/atnG product, via an electrophilic aromatic hydroxylation with concomitant ipso-decarboxylation. The membrane-bound polyprenyl transferase atnF then introduces a farnesyl group before the FAD-dependent monooxygenase atnK functions as the first epoxidase on terminal C12'-C13' olefin, followed by a second epoxidation on C7'-C8' catalyzed by atnA. The terpene cyclase/mutase atnI then initiates the sequential tricyclic ring formation through protonation of the terminal epoxide and catalyzes the regioselective and stereoselective 6/6/6-tricyclic ring formation. The cytochrome P450 monooxygenase atnM is responsible for hydroxylating both C1' and C10'. The next steps may involve ketoreduction and acetyl transfer by the ketoreductase atnB and the acetyltransferase atnC, and lead to the production of arthripenoid B, the final biosynthetic product of the atn cluster. The hydroquinone moiety in arthripenoid B is prone to undergo spontaneous oxidation to afford a benzoquinone compound, a key intermediate for generating structure diversity. For instance, addition of a cysteine followed by ring contraction gives arthripenoid A, tautomerization gives the main product arthripenoid C, addition of a molecular of water or amine affords arthripenoid D or E, respectively, and loss of one water forms arthripenoid F. This is Acetyltransferase atnC from Arthrinium sp.